The primary structure comprises 860 residues: M-phase phosphoprotein 8 (860 aa).

Residue M1 is modified to N-acetylmethionine. 4 positions are modified to phosphoserine: S51, S85, S136, and S138. The Chromo domain maps to 59 to 118; the sequence is FEVEKILDMKTEGGKVLYKVRWKGYTSDDDTWEPEIHLEDCKEVLLEFRKKIAENKAKAV. The interval 80–87 is histone H3K9me3 binding; the sequence is WKGYTSDD. The span at 129 to 141 shows a compositional bias: polar residues; it reads NDIFEANSDSDQQ. The tract at residues 129 to 191 is disordered; that stretch reads NDIFEANSDS…SKPDLESSLE (63 aa). At T144 the chain carries Phosphothreonine. S149 and S164 each carry phosphoserine; by CDK1. Basic and acidic residues-rich tracts occupy residues 159-169 and 177-186; these read QREEKSPDDLK and KLKDKSKPDL. A phosphoserine mark is found at S188, S189, and S192. The segment covering 206 to 249 has biased composition (basic and acidic residues); sequence AKEELKESKKPKKDEVKETKELKKVKKGEIRDLKTKTREDPKEN. The tract at residues 206 to 440 is disordered; the sequence is AKEELKESKK…GRKEPKGLKT (235 aa). Residues 259–268 are compositionally biased toward low complexity; the sequence is ESQVESESSV. A phosphoserine mark is found at S266, S272, and S279. Residues 280–314 show a composition bias toward basic and acidic residues; it reads EGLHSDSREEKQNTKSARERAGQDMGLEHGFEKPL. The residue at position 319 (S319) is a Phosphoserine. T334 bears the Phosphothreonine; by CDK1 mark. The span at 336 to 377 shows a compositional bias: basic and acidic residues; sequence RKAEDTRENRKLENKNAFLEKKTVPKKQRNQDRSKSAAELEK. The residue at position 385 (T385) is a Phosphothreonine; by CDK1. Phosphoserine is present on residues S392, S400, and S403. Residues 408–440 are compositionally biased toward basic and acidic residues; that stretch reads KETKRNESKEKYQKRHDSDKEEKGRKEPKGLKT. Residues 431-560 are interaction with humanin; sequence GRKEPKGLKT…HLDGKDENFA (130 aa). A Phosphothreonine modification is found at T454. Residues 458 to 496 are disordered; sequence KNDVSENNRKREEIPLDFKTIDDHKTKENKQSLKERRNT. 4 ANK repeats span residues 600–629, 633–662, 666–695, and 699–728; these read SGMT…KVNG, NGTT…FVNV, NGET…DCNI, and HQNS…TLSR.

As to quaternary structure, homodimer. Interacts (via chromo domain) with histone H3K9me3. Has the highest affinity for H3K9me3, and lesser affinity for H3K9me2 and H3K9me1. Component of the HUSH complex; at least composed of TASOR, PPHLN1 and MPHOSPH8. Interacts with DNMT3, EHMT1 and SETDB1. Interacts with MORC2; the interaction associateS MORC2 with the HUSH complex which recruits MORC2 to heterochromatic loci. Interacts with ZNF638; leading to recruitment of the HUSH complex to unintegrated retroviral DNA. Interacts with TASOR. Interacts with humanin. In terms of processing, phosphorylated in M (mitotic) phase. Phosphorylation by CDK1 promotes dissociation from chromatin.

It localises to the nucleus. The protein resides in the chromosome. Its function is as follows. Heterochromatin component that specifically recognizes and binds methylated 'Lys-9' of histone H3 (H3K9me) and promotes recruitment of proteins that mediate epigenetic repression. Mediates recruitment of the HUSH complex to H3K9me3 sites: the HUSH complex is recruited to genomic loci rich in H3K9me3 and is required to maintain transcriptional silencing by promoting recruitment of SETDB1, a histone methyltransferase that mediates further deposition of H3K9me3, as well as MORC2. Binds H3K9me and promotes DNA methylation by recruiting DNMT3A to target CpG sites; these can be situated within the coding region of the gene. Mediates down-regulation of CDH1 expression. Also represses L1 retrotransposons in collaboration with MORC2 and, probably, SETDB1, the silencing is dependent of repressive epigenetic modifications, such as H3K9me3 mark. Silencing events often occur within introns of transcriptionally active genes, and lead to the down-regulation of host gene expression. The HUSH complex is also involved in the silencing of unintegrated retroviral DNA by being recruited by ZNF638: some part of the retroviral DNA formed immediately after infection remains unintegrated in the host genome and is transcriptionally repressed. The chain is M-phase phosphoprotein 8 from Homo sapiens (Human).